Reading from the N-terminus, the 289-residue chain is Acetyl-coenzyme A carboxylase carboxyl transferase subunit beta (289 aa).

The 256-residue stretch at 34 to 289 folds into the CoA carboxyltransferase N-terminal domain; sequence MWVKCNKCGE…KLINMHQNSF (256 aa). The Zn(2+) site is built by Cys-38, Cys-41, Cys-57, and Cys-60. A C4-type zinc finger spans residues 38–60; the sequence is CNKCGEILYQNDLEKNYMVCNLC.

Belongs to the AccD/PCCB family. In terms of assembly, acetyl-CoA carboxylase is a heterohexamer composed of biotin carboxyl carrier protein (AccB), biotin carboxylase (AccC) and two subunits each of ACCase subunit alpha (AccA) and ACCase subunit beta (AccD). Zn(2+) serves as cofactor.

Its subcellular location is the cytoplasm. The catalysed reaction is N(6)-carboxybiotinyl-L-lysyl-[protein] + acetyl-CoA = N(6)-biotinyl-L-lysyl-[protein] + malonyl-CoA. It participates in lipid metabolism; malonyl-CoA biosynthesis; malonyl-CoA from acetyl-CoA: step 1/1. In terms of biological role, component of the acetyl coenzyme A carboxylase (ACC) complex. Biotin carboxylase (BC) catalyzes the carboxylation of biotin on its carrier protein (BCCP) and then the CO(2) group is transferred by the transcarboxylase to acetyl-CoA to form malonyl-CoA. The chain is Acetyl-coenzyme A carboxylase carboxyl transferase subunit beta from Clostridium botulinum (strain Kyoto / Type A2).